We begin with the raw amino-acid sequence, 1193 residues long: Sperm-associated antigen 5 (1193 aa).

A disordered region spans residues 1 to 48 (MWRVKKLSLSLSPSPQTGKPSMRTPLRELTLQPGALTNSGKRSPACSS). 5 positions are modified to phosphoserine: S12, S14, S43, S62, and S66. Polar residues predominate over residues 35–48 (ALTNSGKRSPACSS). Positions 96 to 117 (ESDEQPLDPIPQISSTPKTSEE) are disordered. Position 111 is a phosphothreonine; by GSK3-beta (T111). Residues S135, S159, and S334 each carry the phosphoserine modification. The residue at position 336 (T336) is a Phosphothreonine. Phosphoserine is present on residues S341, S353, and S362. Positions 390–405 (PSAPQEKSTNTSQTGL) are enriched in polar residues. Residues 390–416 (PSAPQEKSTNTSQTGLVGTKHSTSETE) are disordered. Residues 482–850 (NKLQHLKESH…LKDTVENLTA (369 aa)) form an interaction with KNSTRN region. 2 coiled-coil regions span residues 545–608 (CCFD…SMRE) and 759–868 (QLTQ…EKTR). T937 is modified (phosphothreonine; by GSK3-beta). S974 is modified (phosphoserine; by GSK3-beta). At T978 the chain carries Phosphothreonine; by GSK3-beta. The stretch at 979–1174 (ELQSLCSLLQ…VQHIYKTLLS (196 aa)) forms a coiled coil.

As to quaternary structure, homodimer, with a globular head domain and a long stalk. Homooligomer; the globular head domains associate, resulting in aster-like structures. Binds to microtubules in the mitotic spindle. Interacts with DCLRE1B/Apollo. Part of an astrin (SPAG5)-kinastrin (SKAP) complex containing KNSTRN, SPAG5, PLK1, DYNLL1 and SGO2. Interacts with KNSTRN. Interacts with RPTOR; this interaction competes with RPTOR binding to MTOR, resulting in decreased mTORC1 formation. Interacts with G3BP1. The complex formed with G3BP1 AND RPTOR is increased by oxidative stress. Interacts with OSBPL8, PCM1 and CDK5RAP2. Interacts (via C-terminus) with NUMA1 (via C-terminus); this interaction promotes the recruitment of SPAG5 to the microtubules at spindle poles in a dynein-dynactin-dependent manner. Interacts with DYNLL1. In terms of processing, phosphorylated by AURKA. As to expression, highly expressed in testis. Detected at low levels in placenta, liver, pancreas, thymus and colon.

The protein localises to the cytoplasm. Its subcellular location is the cytoskeleton. The protein resides in the spindle. It localises to the spindle pole. It is found in the chromosome. The protein localises to the centromere. Its subcellular location is the kinetochore. The protein resides in the midbody. It localises to the microtubule organizing center. It is found in the centrosome. The protein localises to the cytoplasmic granule. Its subcellular location is the centriolar satellite. Functionally, essential component of the mitotic spindle required for normal chromosome segregation and progression into anaphase. Required for chromosome alignment, normal timing of sister chromatid segregation, and maintenance of spindle pole architecture. In complex with SKAP, promotes stable microtubule-kinetochore attachments. May contribute to the regulation of separase activity. May regulate AURKA localization to mitotic spindle, but not to centrosomes and CCNB1 localization to both mitotic spindle and centrosomes. Involved in centriole duplication. Required for CDK5RAP2, CEP152, WDR62 and CEP63 centrosomal localization and promotes the centrosomal localization of CDK2. In non-mitotic cells, upon stress induction, inhibits mammalian target of rapamycin complex 1 (mTORC1) association and recruits the mTORC1 component RPTOR to stress granules (SGs), thereby preventing mTORC1 hyperactivation-induced apoptosis. May enhance GSK3B-mediated phosphorylation of other substrates, such as MAPT/TAU. The protein is Sperm-associated antigen 5 (SPAG5) of Homo sapiens (Human).